The following is a 282-amino-acid chain: ATP synthase gamma chain (282 aa).

It belongs to the ATPase gamma chain family. As to quaternary structure, F-type ATPases have 2 components, CF(1) - the catalytic core - and CF(0) - the membrane proton channel. CF(1) has five subunits: alpha(3), beta(3), gamma(1), delta(1), epsilon(1). CF(0) has three main subunits: a, b and c.

The protein resides in the cell membrane. Functionally, produces ATP from ADP in the presence of a proton gradient across the membrane. The gamma chain is believed to be important in regulating ATPase activity and the flow of protons through the CF(0) complex. In Clostridium acetobutylicum (strain ATCC 824 / DSM 792 / JCM 1419 / IAM 19013 / LMG 5710 / NBRC 13948 / NRRL B-527 / VKM B-1787 / 2291 / W), this protein is ATP synthase gamma chain.